A 156-amino-acid polypeptide reads, in one-letter code: Protein-export protein SecB (156 aa).

The protein belongs to the SecB family. As to quaternary structure, homotetramer, a dimer of dimers. One homotetramer interacts with 1 SecA dimer.

The protein localises to the cytoplasm. Functionally, one of the proteins required for the normal export of preproteins out of the cell cytoplasm. It is a molecular chaperone that binds to a subset of precursor proteins, maintaining them in a translocation-competent state. It also specifically binds to its receptor SecA. This chain is Protein-export protein SecB, found in Xanthobacter autotrophicus (strain ATCC BAA-1158 / Py2).